The chain runs to 98 residues: Co-chaperonin GroES (98 aa).

The protein belongs to the GroES chaperonin family. Heptamer of 7 subunits arranged in a ring. Interacts with the chaperonin GroEL.

The protein resides in the cytoplasm. Its function is as follows. Together with the chaperonin GroEL, plays an essential role in assisting protein folding. The GroEL-GroES system forms a nano-cage that allows encapsulation of the non-native substrate proteins and provides a physical environment optimized to promote and accelerate protein folding. GroES binds to the apical surface of the GroEL ring, thereby capping the opening of the GroEL channel. The sequence is that of Co-chaperonin GroES from Allorhizobium ampelinum (strain ATCC BAA-846 / DSM 112012 / S4) (Agrobacterium vitis (strain S4)).